Consider the following 133-residue polypeptide: Probable 4-amino-4-deoxy-L-arabinose-phosphoundecaprenol flippase subunit ArnF (133 aa).

The Cytoplasmic segment spans residues 1 to 5 (MKTGY). A helical transmembrane segment spans residues 6–26 (LWAIASALLVTVAQLLLKIGM). Over 27–47 (SELPDLQLEKQWFDLHWLWAN) the chain is Periplasmic. Residues 48–68 (IIPISVVFVGLIGYVLSMVCW) form a helical membrane-spanning segment. The EamA domain maps to 51-125 (ISVVFVGLIG…IMLGVWLISQ (75 aa)). The Cytoplasmic portion of the chain corresponds to 69 to 80 (LLTLRTIPLNKA). A helical transmembrane segment spans residues 81–101 (YPLISLSYVFVYILAVVLPWF). Topologically, residues 102 to 103 (QE) are periplasmic. The chain crosses the membrane as a helical span at residues 104–124 (TLSWSKTIGIIFIMLGVWLIS). Topologically, residues 125 to 133 (QKTEQTTSH) are cytoplasmic.

This sequence belongs to the ArnF family. As to quaternary structure, heterodimer of ArnE and ArnF.

Its subcellular location is the cell inner membrane. It participates in bacterial outer membrane biogenesis; lipopolysaccharide biosynthesis. In terms of biological role, translocates 4-amino-4-deoxy-L-arabinose-phosphoundecaprenol (alpha-L-Ara4N-phosphoundecaprenol) from the cytoplasmic to the periplasmic side of the inner membrane. The polypeptide is Probable 4-amino-4-deoxy-L-arabinose-phosphoundecaprenol flippase subunit ArnF (Proteus mirabilis (strain HI4320)).